The primary structure comprises 395 residues: Chaperone protein DnaJ 1 (395 aa).

A J domain is found at 10–75 (DFYQELGVSS…AKRKEYDETR (66 aa)). A CR-type zinc finger spans residues 164–242 (GVAMPLRLTS…CKGTGVTTRT (79 aa)). The Zn(2+) site is built by C177, C180, C194, C197, C216, C219, C230, and C233. 4 CXXCXGXG motif repeats span residues 177–184 (CTNCHGSG), 194–201 (CPTCNGSG), 216–223 (CTDCRGSG), and 230–237 (CEECKGTG).

The protein belongs to the DnaJ family. As to quaternary structure, homodimer. Zn(2+) serves as cofactor.

The protein localises to the cytoplasm. Its function is as follows. Participates actively in the response to hyperosmotic and heat shock by preventing the aggregation of stress-denatured proteins and by disaggregating proteins, also in an autonomous, DnaK-independent fashion. Unfolded proteins bind initially to DnaJ; upon interaction with the DnaJ-bound protein, DnaK hydrolyzes its bound ATP, resulting in the formation of a stable complex. GrpE releases ADP from DnaK; ATP binding to DnaK triggers the release of the substrate protein, thus completing the reaction cycle. Several rounds of ATP-dependent interactions between DnaJ, DnaK and GrpE are required for fully efficient folding. Also involved, together with DnaK and GrpE, in the DNA replication of plasmids through activation of initiation proteins. The chain is Chaperone protein DnaJ 1 from Mycobacterium bovis (strain ATCC BAA-935 / AF2122/97).